Consider the following 717-residue polypeptide: DNA-binding protein RFX2 (717 aa).

Residues 1-28 (MQNSEGGADSPASVALRPAAQPMPASPQ) form a disordered region. A Phosphoserine modification is found at serine 26. The RFX-type winged-helix DNA-binding region spans 194–269 (HLQWLLDNYE…YHYYGIRLKP (76 aa)). The interval 286–318 (RQQPTHQKPRYRPAQKSDSLGDGSAHSNMHGMP) is disordered. Serine 411 bears the Phosphoserine mark. A compositionally biased stretch (basic and acidic residues) spans 685–710 (DGHSSEADVDGRSLGEPLVKRERSDP). Residues 685-717 (DGHSSEADVDGRSLGEPLVKRERSDPSHPLQGI) form a disordered region.

Belongs to the RFX family. Homodimer; probably only forms homodimers in testis. Heterodimer; heterodimerizes with RFX1 and RFX3.

The protein resides in the nucleus. It localises to the cytoplasm. Functionally, transcription factor that acts as a key regulator of spermatogenesis. Acts by regulating expression of genes required for the haploid phase during spermiogenesis, such as genes required for cilium assembly and function. Recognizes and binds the X-box, a regulatory motif with DNA sequence 5'-GTNRCC(0-3N)RGYAAC-3' present on promoters. Probably activates transcription of the testis-specific histone gene H1-6. This Mus musculus (Mouse) protein is DNA-binding protein RFX2 (Rfx2).